The chain runs to 971 residues: UPF0182 protein CMS1887 (971 aa).

Helical transmembrane passes span 16–36, 56–76, 108–128, 161–181, 205–225, 255–275, and 281–301; these read LAIT…FAGF, WGAG…PVFV, LAMF…ASSG, FYHA…LGVL, IQIA…IWLD, TILA…AAIG, and IIGT…YPAI. Residues 687–702 are compositionally biased toward polar residues; the sequence is QDLWTTPNDPTATTEA. Disordered regions lie at residues 687–706 and 874–924; these read QDLW…GTPA and GATA…AQDV. Composition is skewed to low complexity over residues 884 to 900 and 907 to 921; these read PTTP…TDGA and STPT…AAPA.

The protein belongs to the UPF0182 family.

Its subcellular location is the cell membrane. This is UPF0182 protein CMS1887 from Clavibacter sepedonicus (Clavibacter michiganensis subsp. sepedonicus).